The sequence spans 208 residues: Pyrophosphate-energized proton pump 2 (208 aa).

The next 5 helical transmembrane spans lie at 19-39, 54-74, 89-109, 140-160, and 167-187; these read AYPL…TFFV, GLIV…SFTI, GGNL…IVVI, LAVS…GIIA, and LFGT…IVAL.

It belongs to the H(+)-translocating pyrophosphatase (TC 3.A.10) family. Homodimer. It depends on Mg(2+) as a cofactor.

The protein resides in the cell inner membrane. The catalysed reaction is diphosphate + H2O + H(+)(in) = 2 phosphate + 2 H(+)(out). Proton pump that utilizes the energy of pyrophosphate hydrolysis as the driving force for proton movement across the membrane. Generates a proton motive force. This chain is Pyrophosphate-energized proton pump 2 (hppA2), found in Mycoplana dimorpha.